The sequence spans 375 residues: POU domain, class 3, transcription factor 1-B (375 aa).

3 disordered regions span residues 1–29, 56–139, and 151–200; these read MAAT…RMHQ, MSLT…QPLI, and MLGP…PSSD. Composition is skewed to polar residues over residues 107–117, 129–139, and 151–160; these read VHQQTPSSHAW, SPGSNSHQPLI, and MLGPQASSLH. Residues 162–178 show a composition bias toward basic and acidic residues; it reads SMRDPLHDDPGVHDTHV. The POU-specific domain maps to 194 to 268; that stretch reads EDAPSSDDLE…LLNKWLEETD (75 aa). Positions 286–345 form a DNA-binding region, homeobox; that stretch reads KRKKRTSIEVGVKGALENHFLKCPKPSAHEITSLADSLQLEKEVVRVWFCNRRQKEKRMT.

It belongs to the POU transcription factor family. Class-3 subfamily.

It localises to the nucleus. Functionally, acts as a transcription factor. May play a role in neuronal differentiation. This Xenopus laevis (African clawed frog) protein is POU domain, class 3, transcription factor 1-B (pou3f1-b).